Consider the following 239-residue polypeptide: MEIFPAIDLKEGRCVRLYQGEFSKETVMNEDPVAQAIIFEKFGAKRLHIVDLDGAVAGESLNLSVIERICKAVRIPVQVGGGIRSLVAVEKLFSVGVDKVILGTAALYDKTFLEEAVLLYKEKIIVGIDAKNGFVATRGWLDVSEISYIDLAKQMEKIGVQTIVFTDISKDGTLAGPNIEQLELLQKSVAIRLIASGGVASIQDVKKLNDMNIYGVIIGKALYEKTIDLEEVVEVTKLC.

Aspartate 8 acts as the Proton acceptor in catalysis. Aspartate 129 (proton donor) is an active-site residue.

Belongs to the HisA/HisF family.

The protein resides in the cytoplasm. The enzyme catalyses 1-(5-phospho-beta-D-ribosyl)-5-[(5-phospho-beta-D-ribosylamino)methylideneamino]imidazole-4-carboxamide = 5-[(5-phospho-1-deoxy-D-ribulos-1-ylimino)methylamino]-1-(5-phospho-beta-D-ribosyl)imidazole-4-carboxamide. The protein operates within amino-acid biosynthesis; L-histidine biosynthesis; L-histidine from 5-phospho-alpha-D-ribose 1-diphosphate: step 4/9. This is 1-(5-phosphoribosyl)-5-[(5-phosphoribosylamino)methylideneamino] imidazole-4-carboxamide isomerase from Bacillus anthracis (strain A0248).